The chain runs to 436 residues: ATP-dependent protease ATPase subunit HslU (436 aa).

ATP-binding positions include Ile18, 60–65, Asp249, Glu314, and Arg386; that span reads GVGKTE.

The protein belongs to the ClpX chaperone family. HslU subfamily. In terms of assembly, a double ring-shaped homohexamer of HslV is capped on each side by a ring-shaped HslU homohexamer. The assembly of the HslU/HslV complex is dependent on binding of ATP.

The protein localises to the cytoplasm. In terms of biological role, ATPase subunit of a proteasome-like degradation complex; this subunit has chaperone activity. The binding of ATP and its subsequent hydrolysis by HslU are essential for unfolding of protein substrates subsequently hydrolyzed by HslV. HslU recognizes the N-terminal part of its protein substrates and unfolds these before they are guided to HslV for hydrolysis. The protein is ATP-dependent protease ATPase subunit HslU of Ruegeria sp. (strain TM1040) (Silicibacter sp.).